The following is a 498-amino-acid chain: ATP synthase subunit beta, chloroplastic (498 aa).

ATP is bound at residue 172-179 (GGAGVGKT).

The protein belongs to the ATPase alpha/beta chains family. F-type ATPases have 2 components, CF(1) - the catalytic core - and CF(0) - the membrane proton channel. CF(1) has five subunits: alpha(3), beta(3), gamma(1), delta(1), epsilon(1). CF(0) has four main subunits: a(1), b(1), b'(1) and c(9-12).

It localises to the plastid. It is found in the chloroplast thylakoid membrane. It catalyses the reaction ATP + H2O + 4 H(+)(in) = ADP + phosphate + 5 H(+)(out). Functionally, produces ATP from ADP in the presence of a proton gradient across the membrane. The catalytic sites are hosted primarily by the beta subunits. The polypeptide is ATP synthase subunit beta, chloroplastic (Calamus usitatus (Palm tree)).